We begin with the raw amino-acid sequence, 238 residues long: MKYIHILLVFIILSLFITVIKSNYYDNNNQNQNQYSYHHTYNNNNQGNYQSKNVHSESEQNSYNKETRNNNDDDDDDENFERNKKSIRSRYHGYTYRNDQIQSRGNSAKGGSYSESTYFTLHSGTDRYGRRNDYSRFQTRGRSNGYRENMFLNVFDVVGNIKTTRNKRKITKSEKNGRYIKKDHMNNRDSNTNINEKPEYSKSPVFQGGYRSLEKNFTTNYGNSSNASIPLSGKQSQL.

Residues 35–50 (YSYHHTYNNNNQGNYQ) show a composition bias toward low complexity. 2 disordered regions span residues 35–112 (YSYH…KGGS) and 166–204 (NKRK…SKSP). Polar residues predominate over residues 97-106 (RNDQIQSRGN). Residues 171–187 (TKSEKNGRYIKKDHMNN) show a composition bias toward basic and acidic residues.

Its function is as follows. FS800 is likely to have some function in the production or maintenance of the schistosome egg. This chain is Female-specific protein 800, found in Schistosoma mansoni (Blood fluke).